A 92-amino-acid polypeptide reads, in one-letter code: Small ribosomal subunit protein bS20 (92 aa).

The segment at 1–24 (MANTTSAKKATRKIARRTDVNKAR) is disordered.

It belongs to the bacterial ribosomal protein bS20 family.

In terms of biological role, binds directly to 16S ribosomal RNA. This chain is Small ribosomal subunit protein bS20, found in Rhizobium etli (strain ATCC 51251 / DSM 11541 / JCM 21823 / NBRC 15573 / CFN 42).